Consider the following 152-residue polypeptide: Deoxyuridine 5'-triphosphate nucleotidohydrolase (152 aa).

Substrate-binding positions include Arg-71 to Gly-73, Asn-84, Leu-88 to Asp-90, and Met-98.

This sequence belongs to the dUTPase family. It depends on Mg(2+) as a cofactor.

It carries out the reaction dUTP + H2O = dUMP + diphosphate + H(+). The protein operates within pyrimidine metabolism; dUMP biosynthesis; dUMP from dCTP (dUTP route): step 2/2. This enzyme is involved in nucleotide metabolism: it produces dUMP, the immediate precursor of thymidine nucleotides and it decreases the intracellular concentration of dUTP so that uracil cannot be incorporated into DNA. The sequence is that of Deoxyuridine 5'-triphosphate nucleotidohydrolase from Shewanella loihica (strain ATCC BAA-1088 / PV-4).